The following is a 294-amino-acid chain: Cytidine deaminase (294 aa).

CMP/dCMP-type deaminase domains follow at residues 48–168 (DDDA…FGPK) and 187–294 (ALTD…RITF). Residue 89–91 (NME) coordinates substrate. H102 lines the Zn(2+) pocket. E104 functions as the Proton donor in the catalytic mechanism. Positions 129 and 132 each coordinate Zn(2+).

It belongs to the cytidine and deoxycytidylate deaminase family. Homodimer. Zn(2+) serves as cofactor.

The enzyme catalyses cytidine + H2O + H(+) = uridine + NH4(+). It catalyses the reaction 2'-deoxycytidine + H2O + H(+) = 2'-deoxyuridine + NH4(+). This enzyme scavenges exogenous and endogenous cytidine and 2'-deoxycytidine for UMP synthesis. The protein is Cytidine deaminase of Serratia proteamaculans (strain 568).